A 74-amino-acid polypeptide reads, in one-letter code: DNA-directed RNA polymerase subunit omega (74 aa).

The protein belongs to the RNA polymerase subunit omega family. As to quaternary structure, the RNAP catalytic core consists of 2 alpha, 1 beta, 1 beta' and 1 omega subunit. When a sigma factor is associated with the core the holoenzyme is formed, which can initiate transcription.

The catalysed reaction is RNA(n) + a ribonucleoside 5'-triphosphate = RNA(n+1) + diphosphate. Promotes RNA polymerase assembly. Latches the N- and C-terminal regions of the beta' subunit thereby facilitating its interaction with the beta and alpha subunits. This is DNA-directed RNA polymerase subunit omega from Hydrogenovibrio crunogenus (strain DSM 25203 / XCL-2) (Thiomicrospira crunogena).